A 278-amino-acid chain; its full sequence is Large ribosomal subunit protein uL2 (278 aa).

Basic residues-rich tracts occupy residues 210–220 (GRMRWKGKRPS) and 257–278 (TRRKHKPSDKLIVRRRKSNKKR). The disordered stretch occupies residues 210–278 (GRMRWKGKRP…VRRRKSNKKR (69 aa)).

It belongs to the universal ribosomal protein uL2 family. Part of the 50S ribosomal subunit. Forms a bridge to the 30S subunit in the 70S ribosome.

One of the primary rRNA binding proteins. Required for association of the 30S and 50S subunits to form the 70S ribosome, for tRNA binding and peptide bond formation. It has been suggested to have peptidyltransferase activity; this is somewhat controversial. Makes several contacts with the 16S rRNA in the 70S ribosome. In Acidothermus cellulolyticus (strain ATCC 43068 / DSM 8971 / 11B), this protein is Large ribosomal subunit protein uL2.